Consider the following 364-residue polypeptide: Nuclear hormone receptor family member nhr-53 (364 aa).

The nuclear receptor DNA-binding region spans 20 to 95 (PSYCLICCEV…VGMQRSSVQQ (76 aa)). NR C4-type zinc fingers lie at residues 23–43 (CLICCEVADGHHFGAAACRAC) and 59–83 (CPKNGQCFILSNVRNMCRACRYEKC). The region spanning 110–363 (REEPVLDTMR…KNLYDMFSPT (254 aa)) is the NR LBD domain.

The protein belongs to the nuclear hormone receptor family.

Its subcellular location is the nucleus. Its function is as follows. Orphan nuclear receptor. The sequence is that of Nuclear hormone receptor family member nhr-53 (nhr-53) from Caenorhabditis elegans.